We begin with the raw amino-acid sequence, 411 residues long: Arginine deiminase (411 aa).

The Amidino-cysteine intermediate role is filled by C401.

Belongs to the arginine deiminase family.

Its subcellular location is the cytoplasm. It catalyses the reaction L-arginine + H2O = L-citrulline + NH4(+). The protein operates within amino-acid degradation; L-arginine degradation via ADI pathway; carbamoyl phosphate from L-arginine: step 1/2. This Streptococcus pyogenes serotype M2 (strain MGAS10270) protein is Arginine deiminase.